A 353-amino-acid chain; its full sequence is DNA replication and repair protein RecF (353 aa).

30–37 is an ATP binding site; sequence GANGQGKT.

Belongs to the RecF family.

It is found in the cytoplasm. In terms of biological role, the RecF protein is involved in DNA metabolism; it is required for DNA replication and normal SOS inducibility. RecF binds preferentially to single-stranded, linear DNA. It also seems to bind ATP. This is DNA replication and repair protein RecF from Carboxydothermus hydrogenoformans (strain ATCC BAA-161 / DSM 6008 / Z-2901).